We begin with the raw amino-acid sequence, 267 residues long: Hydroxyethylthiazole kinase 2 (267 aa).

A substrate-binding site is contributed by Met41. ATP is bound by residues Lys116 and Thr166. Gly193 provides a ligand contact to substrate.

This sequence belongs to the Thz kinase family. It depends on Mg(2+) as a cofactor.

It catalyses the reaction 5-(2-hydroxyethyl)-4-methylthiazole + ATP = 4-methyl-5-(2-phosphooxyethyl)-thiazole + ADP + H(+). The protein operates within cofactor biosynthesis; thiamine diphosphate biosynthesis; 4-methyl-5-(2-phosphoethyl)-thiazole from 5-(2-hydroxyethyl)-4-methylthiazole: step 1/1. In terms of biological role, catalyzes the phosphorylation of the hydroxyl group of 4-methyl-5-beta-hydroxyethylthiazole (THZ). This is Hydroxyethylthiazole kinase 2 from Streptococcus pneumoniae (strain Hungary19A-6).